The following is a 156-amino-acid chain: Small ribosomal subunit protein uS7 (156 aa).

The protein belongs to the universal ribosomal protein uS7 family. Part of the 30S ribosomal subunit. Contacts proteins S9 and S11.

In terms of biological role, one of the primary rRNA binding proteins, it binds directly to 16S rRNA where it nucleates assembly of the head domain of the 30S subunit. Is located at the subunit interface close to the decoding center, probably blocks exit of the E-site tRNA. The polypeptide is Small ribosomal subunit protein uS7 (Enterobacter sp. (strain 638)).